Here is a 592-residue protein sequence, read N- to C-terminus: A-type ATP synthase subunit A (592 aa).

233–240 (GPFGSGKT) contributes to the ATP binding site.

It belongs to the ATPase alpha/beta chains family. As to quaternary structure, has multiple subunits with at least A(3), B(3), C, D, E, F, H, I and proteolipid K(x).

It localises to the cell membrane. The catalysed reaction is ATP + H2O + 4 H(+)(in) = ADP + phosphate + 5 H(+)(out). Its function is as follows. Component of the A-type ATP synthase that produces ATP from ADP in the presence of a proton gradient across the membrane. The A chain is the catalytic subunit. The sequence is that of A-type ATP synthase subunit A from Saccharolobus solfataricus (strain ATCC 35092 / DSM 1617 / JCM 11322 / P2) (Sulfolobus solfataricus).